A 441-amino-acid polypeptide reads, in one-letter code: MSGDARKTAEGLAYLSGFGNEHASEAVAGALPEGRNSPQRAPLGLYAEQLSGTAFTEPRAHNRRSWLYRIRPSAAHPAFTRSGNGTIRTAPFNQAVPDPNRLRWNPLPVPGPATDFVEGLWTLGGNGDATQRTGMAVHLYHATASMDRVFSDADGELLIVPERGGLLLRTEFGLLHAEPGHVALIPRGVRFRVQLLDEDARGYVCENYGAPFQLPDLGPIGANGLANARDFRAPVAAYEDDESTPGPVEVVNKFCGNLWTAEYDHSPLDVVAWHGNHVPYVYDLRRFNVIGSISYDHPDPSIFTVLTSPSDTPGLAGVDFVVFAPRWLVGEDTFRPPYFHRNVMSEYMGLIEGAYDAKAEGFVPGGGSLHNMMSAHGPDRETFDRASAAELKPQRIDDGLAFMFETRWPVTLTPQAARAEHLQPGYDDVWQGLERHFRPLH.

H297 acts as the Proton acceptor in catalysis. Fe cation contacts are provided by H340 and E346. Y355 and H376 together coordinate homogentisate. H376 serves as a coordination point for Fe cation.

The protein belongs to the homogentisate dioxygenase family. Hexamer; dimer of trimers. Fe cation serves as cofactor.

The catalysed reaction is homogentisate + O2 = 4-maleylacetoacetate + H(+). It participates in amino-acid degradation; L-phenylalanine degradation; acetoacetate and fumarate from L-phenylalanine: step 4/6. Involved in the catabolism of homogentisate (2,5-dihydroxyphenylacetate or 2,5-OH-PhAc), a central intermediate in the degradation of phenylalanine and tyrosine. Catalyzes the oxidative ring cleavage of the aromatic ring of homogentisate to yield maleylacetoacetate. This is Homogentisate 1,2-dioxygenase from Streptomyces coelicolor (strain ATCC BAA-471 / A3(2) / M145).